Reading from the N-terminus, the 210-residue chain is Imidazole glycerol phosphate synthase subunit HisH (210 aa).

Residues 3–210 (KVALLDYGSG…QLLRNWIDLL (208 aa)) enclose the Glutamine amidotransferase type-1 domain. Residue Cys81 is the Nucleophile of the active site. Active-site residues include His191 and Glu193.

In terms of assembly, heterodimer of HisH and HisF.

Its subcellular location is the cytoplasm. The catalysed reaction is 5-[(5-phospho-1-deoxy-D-ribulos-1-ylimino)methylamino]-1-(5-phospho-beta-D-ribosyl)imidazole-4-carboxamide + L-glutamine = D-erythro-1-(imidazol-4-yl)glycerol 3-phosphate + 5-amino-1-(5-phospho-beta-D-ribosyl)imidazole-4-carboxamide + L-glutamate + H(+). The enzyme catalyses L-glutamine + H2O = L-glutamate + NH4(+). It participates in amino-acid biosynthesis; L-histidine biosynthesis; L-histidine from 5-phospho-alpha-D-ribose 1-diphosphate: step 5/9. IGPS catalyzes the conversion of PRFAR and glutamine to IGP, AICAR and glutamate. The HisH subunit catalyzes the hydrolysis of glutamine to glutamate and ammonia as part of the synthesis of IGP and AICAR. The resulting ammonia molecule is channeled to the active site of HisF. This chain is Imidazole glycerol phosphate synthase subunit HisH, found in Corynebacterium diphtheriae (strain ATCC 700971 / NCTC 13129 / Biotype gravis).